We begin with the raw amino-acid sequence, 420 residues long: Serine hydroxymethyltransferase (420 aa).

Residues leucine 121 and 125–127 each bind (6S)-5,6,7,8-tetrahydrofolate; that span reads GHL. Lysine 230 bears the N6-(pyridoxal phosphate)lysine mark. 354–356 contacts (6S)-5,6,7,8-tetrahydrofolate; sequence SPF.

It belongs to the SHMT family. As to quaternary structure, homodimer. Pyridoxal 5'-phosphate is required as a cofactor.

Its subcellular location is the cytoplasm. It carries out the reaction (6R)-5,10-methylene-5,6,7,8-tetrahydrofolate + glycine + H2O = (6S)-5,6,7,8-tetrahydrofolate + L-serine. The protein operates within one-carbon metabolism; tetrahydrofolate interconversion. Its pathway is amino-acid biosynthesis; glycine biosynthesis; glycine from L-serine: step 1/1. Functionally, catalyzes the reversible interconversion of serine and glycine with tetrahydrofolate (THF) serving as the one-carbon carrier. This reaction serves as the major source of one-carbon groups required for the biosynthesis of purines, thymidylate, methionine, and other important biomolecules. Also exhibits THF-independent aldolase activity toward beta-hydroxyamino acids, producing glycine and aldehydes, via a retro-aldol mechanism. This Rickettsia africae (strain ESF-5) protein is Serine hydroxymethyltransferase.